The sequence spans 714 residues: Nucleolin (714 aa).

The disordered stretch occupies residues 1-303 (MVKLAKAGKT…AKKQKVEGSE (303 aa)). N6-acetyllysine occurs at positions 9, 15, and 16. Residues 24-42 (VEEDSEDEEMSEEEDDSSG) are compositionally biased toward acidic residues. Phosphoserine is present on residues Ser28, Ser34, Ser40, and Ser41. Positions 55-106 (ATATPAKKVVVSQTKKVAVPTPAKKAAVTPGKKAAATPAKKAVTPAKAVATP) are enriched in low complexity. Copy 1 of the repeat occupies 57-64 (ATPAKKVV). The 8 X 8 AA tandem repeats of X-T-P-X-K-K-X-X stretch occupies residues 57-134 (ATPAKKVVVS…GAVTPAKGAK (78 aa)). Phosphoserine is present on Ser66. Phosphothreonine occurs at positions 68, 75, 83, and 91. Repeat copies occupy residues 74 to 81 (PTPAKKAA), 82 to 89 (VTPGKKAA), and 90 to 97 (ATPAKKAV). The residue at position 95 (Lys95) is an N6-acetyllysine. A Phosphothreonine modification is found at Thr98. The 5; truncated repeat unit spans residues 98-103 (TPAKAV). N6-acetyllysine is present on Lys101. Residues 104–111 (ATPGKKGA) form repeat 6. At Thr105 the chain carries Phosphothreonine. At Lys108 the chain carries N6-acetyllysine. At Thr112 the chain carries Phosphothreonine. N6-acetyllysine is present on Lys115. 2 consecutive repeat copies span residues 119-126 (ATPGKKGA) and 127-134 (VTPAKGAK). At Thr120 the chain carries Phosphothreonine. An N6-acetyllysine modification is found at Lys123. Phosphoserine occurs at positions 144 and 157. Over residues 144–170 (SDEDEDDDDDEDDSDEDEEDEEEDEFE) the composition is skewed to acidic residues. Over residues 171–187 (PPVVKGKQGKVAAAAPA) the composition is skewed to low complexity. Ser188 bears the Phosphoserine mark. Acidic residues predominate over residues 188–216 (SEDEDEEEDEEEEEEDEEEEDDSEEEEAM). Thr219 is subject to Phosphothreonine. Acidic residues predominate over residues 240 to 272 (EEDDDDEEEDEDEEEDEEEEEDEEEEEEEEEEE). Over residues 285-301 (MTKQKEVPEAKKQKVEG) the composition is skewed to basic and acidic residues. A Glycyl lysine isopeptide (Lys-Gly) (interchain with G-Cter in SUMO1); alternate cross-link involves residue Lys298. Lys298 is covalently cross-linked (Glycyl lysine isopeptide (Lys-Gly) (interchain with G-Cter in SUMO2); alternate). At Ser302 the chain carries Phosphoserine. RRM domains are found at residues 308 to 384 (FNLF…KPKG) and 394 to 467 (RTLL…YTGE). At Lys319 the chain carries N6-acetyllysine. Lys325 is covalently cross-linked (Glycyl lysine isopeptide (Lys-Gly) (interchain with G-Cter in SUMO1); alternate). Residue Lys325 forms a Glycyl lysine isopeptide (Lys-Gly) (interchain with G-Cter in SUMO2); alternate linkage. Lys349 is modified (N6-acetyllysine). Ser357 is modified (phosphoserine). Thr368 carries the phosphothreonine modification. Residue Lys371 forms a Glycyl lysine isopeptide (Lys-Gly) (interchain with G-Cter in SUMO2) linkage. Lys378 is covalently cross-linked (Glycyl lysine isopeptide (Lys-Gly) (interchain with G-Cter in SUMO2); alternate). Lys378 carries the N6-acetyllysine; alternate modification. Lys399 is modified (N6-acetyllysine). The residue at position 402 (Ser402) is a Phosphoserine. Thr406 is subject to Phosphothreonine. N6-acetyllysine is present on residues Lys428 and Lys445. A phosphoserine mark is found at Ser459 and Ser461. Residues Lys468 and Lys477 each carry the N6-acetyllysine modification. The region spanning 486-560 (KTLVLSNLSY…RTIRLELQGP (75 aa)) is the RRM 3 domain. Lys513 is covalently cross-linked (Glycyl lysine isopeptide (Lys-Gly) (interchain with G-Cter in SUMO2); alternate). The residue at position 513 (Lys513) is an N6-acetyllysine; alternate. Lys521 carries the N6-acetyllysine modification. Position 563 is a phosphoserine (Ser563). Lys572 carries the N6-acetyllysine modification. The 76-residue stretch at 572–647 (KTLFVKGLSE…NKVTLDWAKP (76 aa)) folds into the RRM 4 domain. Residue Lys577 forms a Glycyl lysine isopeptide (Lys-Gly) (interchain with G-Cter in SUMO2); alternate linkage. N6-acetyllysine; alternate is present on Lys577. Ser580 is modified (phosphoserine). Lys589 is covalently cross-linked (Glycyl lysine isopeptide (Lys-Gly) (interchain with G-Cter in SUMO1); alternate). Lys589 participates in a covalent cross-link: Glycyl lysine isopeptide (Lys-Gly) (interchain with G-Cter in SUMO2); alternate. Phosphoserine occurs at positions 591 and 619. Lys624 is covalently cross-linked (Glycyl lysine isopeptide (Lys-Gly) (interchain with G-Cter in SUMO2)). The disordered stretch occupies residues 642–714 (LDWAKPKGEG…KPQGKKTKFE (73 aa)). Position 646 is an N6-acetyllysine (Lys646). Positions 650–703 (EGGFGGRGGGRGGFGGRGGGRGGGRGGFGGRGRGGFGGRGGFRGGRGGGGGGGD) are enriched in gly residues. 9 positions are modified to asymmetric dimethylarginine: Arg656, Arg660, Arg666, Arg670, Arg674, Arg680, Arg682, Arg688, and Arg692. Arg695 is subject to Asymmetric dimethylarginine; alternate. Position 695 is an omega-N-methylarginine; alternate (Arg695).

Identified in a IGF2BP1-dependent mRNP granule complex containing untranslated mRNAs. Component of the SWAP complex that consists of NPM1, NCL/nucleolin, PARP1 and SWAP70. Component of a complex which is at least composed of HTATSF1/Tat-SF1, the P-TEFb complex components CDK9 and CCNT1, RNA polymerase II, SUPT5H, and NCL/nucleolin. Interacts with AICDA. Interacts with APTX. Interacts with C1QBP. Interacts with ERBB4. Interacts (via C-terminus) with FMR1 isoform 6 (via N-terminus). Interacts with GZF1; this interaction is important for nucleolar localization of GZF1. Interacts with NSUN2. Interacts with NVL. Interacts (via N-terminus domain) with SETX. Interacts (via RRM1 and C-terminal RRM4/Arg/Gly-rich domains) with TERT; the interaction is important for nucleolar localization of TERT. Interacts with WDR46. Interacts with ZFP36. Interacts with LRRC34. Interacts with RRP1B. Interacts with HNRNPU; this interaction occurs during mitosis. Interacts with RIOK1; RIOK1 recruits NCL to PRMT5 for symmetrically methylation. Interacts with ZBTB7B. Interacts with MDK; this interaction promotes NCL clustering and lateral movements of this complex into lipid rafts leading to MDK internalization. Interacts with HDGF. Interacts with ALKBH2. Interacts with IGFBP5; this interaction is necessary for IGFBP5 localization to the nucleus. Interacts with DDX24 (when ubiquitinated); this interaction may be important during ribosome biogenesis. Post-translationally, some glutamate residues are glycylated by TTLL8. This modification occurs exclusively on glutamate residues and results in a glycine chain on the gamma-carboxyl group. In terms of processing, symmetrically methylated by PRMT5.

It is found in the nucleus. It localises to the nucleolus. The protein localises to the cytoplasm. Its function is as follows. Nucleolin is the major nucleolar protein of growing eukaryotic cells. It is found associated with intranucleolar chromatin and pre-ribosomal particles. It induces chromatin decondensation by binding to histone H1. It is thought to play a role in pre-rRNA transcription and ribosome assembly. May play a role in the process of transcriptional elongation. Binds RNA oligonucleotides with 5'-UUAGGG-3' repeats more tightly than the telomeric single-stranded DNA 5'-TTAGGG-3' repeats. This is Nucleolin (NCL) from Mesocricetus auratus (Golden hamster).